Consider the following 904-residue polypeptide: Trichohyalin-like protein 1 (904 aa).

The region spanning 48 to 83 (CVLHAVEKNSNLLNIDSNGIISFDEFVLAIFNLLNL) is the EF-hand domain. Disordered stretches follow at residues 102-792 (PEKE…CSVE) and 858-890 (PYTR…HPQR). Polar residues predominate over residues 113-128 (QATTGDGQWTVGTSPT). Basic and acidic residues-rich tracts occupy residues 172 to 185 (ASEH…HLEG), 222 to 240 (TERK…EPAR), 268 to 300 (ATQR…DEPS), 349 to 371 (NLGE…ETKD), and 385 to 398 (SDMR…RGPE). Residues 443–452 (ETQYLSSEGG) show a composition bias toward polar residues. A compositionally biased stretch (acidic residues) spans 524–536 (VEEEDGYQGEDPE). The span at 538–554 (PFTQSDEGSSETPNSLA) shows a compositional bias: polar residues. Residues 555 to 578 (SEEGNSSSETGELPVQGDSQSQGD) show a composition bias toward low complexity. The segment covering 586–598 (GGHNNNPDTQRQG) has biased composition (polar residues). Residues 759 to 770 (GDQKSPAKKEHN) show a composition bias toward basic and acidic residues. Positions 771-780 (SSVPWSSLEK) are enriched in polar residues. The segment covering 881-890 (LEDKQGHPQR) has biased composition (basic and acidic residues).

Belongs to the S-100 family.

The polypeptide is Trichohyalin-like protein 1 (TCHHL1) (Homo sapiens (Human)).